We begin with the raw amino-acid sequence, 407 residues long: Phosphopentomutase (407 aa).

Residues Asp-10, Asp-306, His-311, Asp-347, His-348, and His-359 each contribute to the Mn(2+) site.

This sequence belongs to the phosphopentomutase family. It depends on Mn(2+) as a cofactor.

The protein resides in the cytoplasm. It catalyses the reaction 2-deoxy-alpha-D-ribose 1-phosphate = 2-deoxy-D-ribose 5-phosphate. The enzyme catalyses alpha-D-ribose 1-phosphate = D-ribose 5-phosphate. It functions in the pathway carbohydrate degradation; 2-deoxy-D-ribose 1-phosphate degradation; D-glyceraldehyde 3-phosphate and acetaldehyde from 2-deoxy-alpha-D-ribose 1-phosphate: step 1/2. Functionally, isomerase that catalyzes the conversion of deoxy-ribose 1-phosphate (dRib-1-P) and ribose 1-phosphate (Rib-1-P) to deoxy-ribose 5-phosphate (dRib-5-P) and ribose 5-phosphate (Rib-5-P), respectively. This is Phosphopentomutase from Photorhabdus laumondii subsp. laumondii (strain DSM 15139 / CIP 105565 / TT01) (Photorhabdus luminescens subsp. laumondii).